Reading from the N-terminus, the 58-residue chain is Large ribosomal subunit protein bL32 (58 aa).

Belongs to the bacterial ribosomal protein bL32 family.

This chain is Large ribosomal subunit protein bL32, found in Thermobifida fusca (strain YX).